A 65-amino-acid polypeptide reads, in one-letter code: Large ribosomal subunit protein uL30 (65 aa).

This sequence belongs to the universal ribosomal protein uL30 family. As to quaternary structure, part of the 50S ribosomal subunit.

This chain is Large ribosomal subunit protein uL30, found in Brucella suis (strain ATCC 23445 / NCTC 10510).